We begin with the raw amino-acid sequence, 337 residues long: GTP 3',8-cyclase (337 aa).

The 227-residue stretch at 17 to 243 folds into the Radical SAM core domain; sequence PFQRQYYYLR…HKSHTDGPAK (227 aa). Arg-26 is a binding site for GTP. Cys-33 and Cys-37 together coordinate [4Fe-4S] cluster. Tyr-39 is a binding site for S-adenosyl-L-methionine. A [4Fe-4S] cluster-binding site is contributed by Cys-40. Arg-76 serves as a coordination point for GTP. Gly-80 provides a ligand contact to S-adenosyl-L-methionine. Thr-107 contributes to the GTP binding site. Ser-131 contributes to the S-adenosyl-L-methionine binding site. A GTP-binding site is contributed by Lys-168. Position 202 (Met-202) interacts with S-adenosyl-L-methionine. [4Fe-4S] cluster contacts are provided by Cys-265 and Cys-268. 270–272 contributes to the GTP binding site; it reads RLR. Residue Cys-282 participates in [4Fe-4S] cluster binding.

The protein belongs to the radical SAM superfamily. MoaA family. Monomer and homodimer. Requires [4Fe-4S] cluster as cofactor.

It catalyses the reaction GTP + AH2 + S-adenosyl-L-methionine = (8S)-3',8-cyclo-7,8-dihydroguanosine 5'-triphosphate + 5'-deoxyadenosine + L-methionine + A + H(+). Its pathway is cofactor biosynthesis; molybdopterin biosynthesis. Functionally, catalyzes the cyclization of GTP to (8S)-3',8-cyclo-7,8-dihydroguanosine 5'-triphosphate. The sequence is that of GTP 3',8-cyclase from Haemophilus influenzae (strain ATCC 51907 / DSM 11121 / KW20 / Rd).